The sequence spans 294 residues: Potassium-transporting ATPase subunit beta (294 aa).

Over 1 to 36 (MAALQEKKSCSQRMAEFRQYCWNPDTGQMLGRTPAR) the chain is Cytoplasmic. Residues 37–57 (WVWISLYYAAFYVVMTGLFAL) traverse the membrane as a helical; Signal-anchor for type II membrane protein segment. At 58–294 (CIYVLMQTID…KVEFKLTIQK (237 aa)) the chain is on the extracellular side. Asn-99, Asn-103, Asn-130, Asn-146, and Asn-161 each carry an N-linked (GlcNAc...) asparagine glycan. Residues Cys-131 and Cys-152 are joined by a disulfide bond. Cysteines 162 and 178 form a disulfide. 2 N-linked (GlcNAc...) asparagine glycosylation sites follow: Asn-193 and Asn-225. An immunoglobulin-like region spans residues 194–294 (NTAPRVDCTF…KVEFKLTIQK (101 aa)). The cysteines at positions 201 and 266 are disulfide-linked.

This sequence belongs to the X(+)/potassium ATPases subunit beta family. In terms of assembly, the ATPase pump is composed of two subunits: alpha (catalytic) and beta (regulatory). Interacts with alpha subunit ATP12A; this interaction is required for the formation of a functionally active pump and targeting at the plasma membrane. Interacts (via N-terminus) with alpha subunit ATP4A (via the P-domain). Post-translationally, N-glycosylation is necessary for assembly and functional expression of the pump at the plasma membrane. In terms of tissue distribution, stomach.

The protein localises to the apical cell membrane. It localises to the cell membrane. The beta subunit of the gastric H(+)/K(+) ATPase pump which transports H(+) ions in exchange for K(+) ions across the apical membrane of parietal cells. Plays a structural and regulatory role in the assembly and membrane targeting of a functionally active pump. Within a transport cycle, the transfer of a H(+) ion across the membrane is coupled to ATP hydrolysis and is associated with a transient phosphorylation of the alpha subunit that shifts the pump conformation from inward-facing (E1) to outward-facing state (E2). Interacts with the phosphorylation domain of the alpha subunit and functions as a ratchet, stabilizing the lumenal-open E2 conformation and preventing the reverse reaction of the transport cycle. The polypeptide is Potassium-transporting ATPase subunit beta (Atp4b) (Rattus norvegicus (Rat)).